We begin with the raw amino-acid sequence, 109 residues long: uncharacterized protein (109 aa).

An N-terminal signal peptide occupies residues 1 to 21 (MEKSICTSVLVLGLFISSAIG).

In terms of tissue distribution, prismatic layer of shell (at protein level). Expressed primarily in the mantle with highest level in the mantle edge and lower level in the mantle pallium.

It is found in the secreted. This is an uncharacterized protein from Margaritifera margaritifera (Freshwater pearl mussel).